The primary structure comprises 1010 residues: ATP-dependent DNA/RNA helicase DHX36 (1010 aa).

The segment at 1 to 54 is required for recruitment to cytoplasmic stress granules; that stretch reads MSYDYHQNWGRDGGPRSSGGGYGGSYGGSHGGGHGGNRGSGGGGGGGGGRGGRG. A disordered region spans residues 1–63; the sequence is MSYDYHQNWG…GRHPGHLKGR (63 aa). The required for the pre-miR-134 transport stretch occupies residues 1–107; sequence MSYDYHQNWG…IVQLLHSVQT (107 aa). The interval 1 to 202 is necessary for nuclear and nucleolar caps localizations; it reads MSYDYHQNWG…KKTDLRYIEM (202 aa). Positions 16-51 are enriched in gly residues; the sequence is RSSGGGYGGSYGGSHGGGHGGNRGSGGGGGGGGGRG. Residues 56–78 form a DSM (DHX36-specific motif) region; the sequence is HPGHLKGREIGLWYAKKQGQKNK. The tract at residues 56–108 is required for G4-DNA- and G4-RNA-binding; that stretch reads HPGHLKGREIGLWYAKKQGQKNKEAERQERAVVHMDERREEQIVQLLHSVQTK. RecA-like domain stretches follow at residues 109 to 388 and 389 to 630; these read NDKD…MIHI and PGFT…DYQL. One can recognise a Helicase ATP-binding domain in the interval 219-389; sequence VNMIDNHQVT…FGNCPMIHIP (171 aa). An ATP-binding site is contributed by 235–240; it reads GCGKTT. Residues 267 to 319 are necessary for interaction with single-stranded DNA at the 3'-end of the G4-DNA structure; sequence RRISAISVAERVAAERAESCGNGNSTGYQIRLQSRLPRKQGSILYCTTGIILQ. The DEAH box motif lies at 336–339; it reads DEIH. Mg(2+) contacts are provided by Glu-337 and His-339. The Helicase C-terminal domain maps to 479 to 649; sequence ALIRYIVLEE…ELCLQIKILR (171 aa). The tract at residues 500-559 is necessary for interaction with single-stranded DNA at the 3'-end of the G4-DNA structure; that stretch reads WDNISTLHDLLMSQVMFKSDKFIIIPLHSLMPTVNQTQVFKRTPPGVRKIVIATNIAETS. Residues 519–530 carry the Nuclear localization signal motif; it reads DKFIIIPLHSLM. Residues Ser-559 and 604–607 each bind ATP; that span reads RAGR. The WH domain stretch occupies residues 631 to 700; sequence PEILRTPLEE…LGVHLARLPV (70 aa). 3 necessary for interaction with single-stranded DNA at the 3'-end of the G4-DNA structure regions span residues 640–699, 851–862, and 872–902; these read ELCL…ARLP, NLGKKRKMVKVY, and HPKSVNVEQTEFNYNWLIYHLKMRTSSIYLY. The OB-fold-like subdomains stretch occupies residues 843 to 907; it reads PKVAKIRLNL…SIYLYDCTEV (65 aa). Position 949 is an N6-acetyllysine (Lys-949). Ser-965 carries the post-translational modification Phosphoserine.

In terms of assembly, found in a multi-helicase-TICAM1 complex at least composed of DHX36, DDX1, DDX21 and TICAM1; this complex exists in resting cells with or without dsRNA poly(I:C) ligand stimulation. Interacts (via C-terminus) with TICAM1 (via TIR domain). Interacts (via C-terminus) with DDX21; this interaction serves as bridges to TICAM1. Interacts with TERT; this interaction is dependent on the ability of DHX36 to bind to the G-quadruplex RNA (G4-RNA) structure present in the telomerase RNA template component (TERC). Interacts with DKC1; this interaction is dependent on the ability of DHX36 to bind to the G4-RNA structure present in TERC. Interacts with PARN; this interaction stimulates PARN to enhance uPA mRNA decay. Interacts with EXOSC3; this interaction occurs in a RNase-insensitive manner. Interacts with EXOSC10; this interaction occurs in a RNase-insensitive manner. Interacts with ILF3; this interaction occurs in a RNA-dependent manner. Interacts with ELAVL1; this interaction occurs in an RNA-dependent manner. Interacts with DDX5; this interaction occurs in a RNA-dependent manner. Interacts with DDX17; this interaction occurs in a RNA-dependent manner. Interacts with HDAC1; this interaction occurs in a RNA-dependent manner. Interacts with HDAC3; this interaction occurs in a RNA-dependent manner. Interacts with HDAC4. Interacts with AGO1. Interacts with AGO2. Interacts with ERCC6. The cofactor is Mg(2+).

Its subcellular location is the nucleus. It localises to the cytoplasm. The protein resides in the cytosol. The protein localises to the stress granule. It is found in the nucleus speckle. Its subcellular location is the chromosome. It localises to the telomere. The protein resides in the mitochondrion. The protein localises to the perikaryon. It is found in the cell projection. Its subcellular location is the dendrite. It localises to the axon. It catalyses the reaction ATP + H2O = ADP + phosphate + H(+). Its activity is regulated as follows. ATPase activity is enhanced in the presence of homomeric poly(U) RNAs, but not by double-stranded DNA (dsDNA), double-stranded RNA (dsRNA) and tRNA. Its function is as follows. Multifunctional ATP-dependent helicase that unwinds G-quadruplex (G4) structures. Plays a role in many biological processes such as genomic integrity, gene expression regulations and as a sensor to initiate antiviral responses. G4 structures correspond to helical structures containing guanine tetrads. Binds with high affinity to and unwinds G4 structures that are formed in nucleic acids (G4-DNA and G4-RNA). Plays a role in genomic integrity. Converts the G4-RNA structure present in telomerase RNA template component (TREC) into a double-stranded RNA to promote P1 helix formation that acts as a template boundary ensuring accurate reverse transcription. Plays a role in transcriptional regulation. Resolves G4-DNA structures in promoters of genes, such as YY1, KIT/c-kit and ALPL and positively regulates their expression. Plays a role in post-transcriptional regulation. Unwinds a G4-RNA structure located in the 3'-UTR polyadenylation site of the pre-mRNA TP53 and stimulates TP53 pre-mRNA 3'-end processing in response to ultraviolet (UV)-induced DNA damage. Binds to the precursor-microRNA-134 (pre-miR-134) terminal loop and regulates its transport into the synapto-dendritic compartment. Involved in the pre-miR-134-dependent inhibition of target gene expression and the control of dendritic spine size. Plays a role in the regulation of cytoplasmic mRNA translation and mRNA stability. Binds to both G4-RNA structures and alternative non-quadruplex-forming sequence within the 3'-UTR of the PITX1 mRNA regulating negatively PITX1 protein expression. Binds to both G4-RNA structure in the 5'-UTR and AU-rich elements (AREs) localized in the 3'-UTR of NKX2-5 mRNA to either stimulate protein translation or induce mRNA decay in an ELAVL1-dependent manner, respectively. Also binds to ARE sequences present in several mRNAs mediating exosome-mediated 3'-5' mRNA degradation. Involved in cytoplasmic urokinase-type plasminogen activator (uPA) mRNA decay. Component of a multi-helicase-TICAM1 complex that acts as a cytoplasmic sensor of viral double-stranded RNA (dsRNA) and plays a role in the activation of a cascade of antiviral responses including the induction of pro-inflammatory cytokines via the adapter molecule TICAM1. Required for the early embryonic development and hematopoiesis. Involved in the regulation of cardioblast differentiation and proliferation during heart development. Involved in spermatogonia differentiation. May play a role in ossification. The polypeptide is ATP-dependent DNA/RNA helicase DHX36 (Bos taurus (Bovine)).